We begin with the raw amino-acid sequence, 108 residues long: uncharacterized protein (108 aa).

Over residues 48–73 (NSNIPSSSSSSPSFASFFSSTSTSAT) the composition is skewed to low complexity. Positions 48-81 (NSNIPSSSSSSPSFASFFSSTSTSATLNGSSNNK) are disordered.

This is an uncharacterized protein from Dictyostelium discoideum (Social amoeba).